The sequence spans 487 residues: N-succinylglutamate 5-semialdehyde dehydrogenase (487 aa).

221 to 226 (GSSDTG) provides a ligand contact to NAD(+). Catalysis depends on residues glutamate 244 and cysteine 278.

Belongs to the aldehyde dehydrogenase family. AstD subfamily.

The enzyme catalyses N-succinyl-L-glutamate 5-semialdehyde + NAD(+) + H2O = N-succinyl-L-glutamate + NADH + 2 H(+). Its pathway is amino-acid degradation; L-arginine degradation via AST pathway; L-glutamate and succinate from L-arginine: step 4/5. Catalyzes the NAD-dependent reduction of succinylglutamate semialdehyde into succinylglutamate. In Burkholderia multivorans (strain ATCC 17616 / 249), this protein is N-succinylglutamate 5-semialdehyde dehydrogenase.